Consider the following 611-residue polypeptide: Glutamine--fructose-6-phosphate aminotransferase [isomerizing] (611 aa).

Cys2 (nucleophile; for GATase activity) is an active-site residue. The region spanning 2–219 (CGIVGAIAER…EGDIAEIRRD (218 aa)) is the Glutamine amidotransferase type-2 domain. 2 SIS domains span residues 287–427 (AAEL…VQKR) and 460–601 (VSEL…VDQP). The For Fru-6P isomerization activity role is filled by Lys606.

Homodimer.

It localises to the cytoplasm. It catalyses the reaction D-fructose 6-phosphate + L-glutamine = D-glucosamine 6-phosphate + L-glutamate. Functionally, catalyzes the first step in hexosamine metabolism, converting fructose-6P into glucosamine-6P using glutamine as a nitrogen source. The protein is Glutamine--fructose-6-phosphate aminotransferase [isomerizing] of Pseudomonas aeruginosa (strain ATCC 15692 / DSM 22644 / CIP 104116 / JCM 14847 / LMG 12228 / 1C / PRS 101 / PAO1).